An 800-amino-acid polypeptide reads, in one-letter code: Structural protein ORF800 (800 aa).

Coiled-coil stretches lie at residues Ala-98–Ala-130, Leu-447–Leu-475, Ala-514–Leu-567, and Ala-606–Ala-633. Positions Ala-759–Val-800 are disordered. Acidic residues predominate over residues Ser-761–Glu-776. The segment covering Glu-785 to Val-800 has biased composition (basic and acidic residues).

The protein resides in the virion. The polypeptide is Structural protein ORF800 (Acidianus convivator (ATV)).